A 546-amino-acid chain; its full sequence is Chaperonin GroEL (546 aa).

Residues 30 to 33, lysine 51, 87 to 91, glycine 415, 479 to 481, and aspartate 495 contribute to the ATP site; these read TLGP, DGTTT, and NAA. Residues 526-546 are disordered; sequence KKDEPAMPAGGGMGGMGGMDF. Positions 534-546 are enriched in gly residues; the sequence is AGGGMGGMGGMDF.

Belongs to the chaperonin (HSP60) family. As to quaternary structure, forms a cylinder of 14 subunits composed of two heptameric rings stacked back-to-back. Interacts with the co-chaperonin GroES.

The protein localises to the cytoplasm. The catalysed reaction is ATP + H2O + a folded polypeptide = ADP + phosphate + an unfolded polypeptide.. In terms of biological role, together with its co-chaperonin GroES, plays an essential role in assisting protein folding. The GroEL-GroES system forms a nano-cage that allows encapsulation of the non-native substrate proteins and provides a physical environment optimized to promote and accelerate protein folding. The polypeptide is Chaperonin GroEL (Xanthomonas euvesicatoria pv. vesicatoria (strain 85-10) (Xanthomonas campestris pv. vesicatoria)).